The primary structure comprises 343 residues: Programmed cell death protein 2 (343 aa).

Residues Cys134, Cys137, Cys145, Cys148, Cys154, His158, His167, and Cys171 each contribute to the Zn(2+) site. An MYND-type; atypical zinc finger spans residues Cys134–Cys171.

In terms of processing, ubiquitinated by PRKN, promoting proteasomal degradation.

It localises to the nucleus. Its function is as follows. May be a DNA-binding protein with a regulatory function. May play an important role in cell death and/or in regulation of cell proliferation. This chain is Programmed cell death protein 2 (Pdcd2), found in Rattus norvegicus (Rat).